Here is a 360-residue protein sequence, read N- to C-terminus: Phenylalanine--tRNA ligase alpha subunit (360 aa).

Glu260 contributes to the Mg(2+) binding site.

Belongs to the class-II aminoacyl-tRNA synthetase family. Phe-tRNA synthetase alpha subunit type 1 subfamily. In terms of assembly, tetramer of two alpha and two beta subunits. Requires Mg(2+) as cofactor.

The protein resides in the cytoplasm. The catalysed reaction is tRNA(Phe) + L-phenylalanine + ATP = L-phenylalanyl-tRNA(Phe) + AMP + diphosphate + H(+). The sequence is that of Phenylalanine--tRNA ligase alpha subunit from Methylobacterium radiotolerans (strain ATCC 27329 / DSM 1819 / JCM 2831 / NBRC 15690 / NCIMB 10815 / 0-1).